The chain runs to 509 residues: GMP synthase [glutamine-hydrolyzing] (509 aa).

Residues 4–193 (NVLILDFGSQ…LIKIAGTKAT (190 aa)) form the Glutamine amidotransferase type-1 domain. The Nucleophile role is filled by cysteine 79. Residues histidine 167 and glutamate 169 contribute to the active site. In terms of domain architecture, GMPS ATP-PPase spans 194-384 (WTPGKFVDLT…LGIDKELLGR (191 aa)). 221-227 (SGGVDST) provides a ligand contact to ATP.

Homodimer.

It carries out the reaction XMP + L-glutamine + ATP + H2O = GMP + L-glutamate + AMP + diphosphate + 2 H(+). Its pathway is purine metabolism; GMP biosynthesis; GMP from XMP (L-Gln route): step 1/1. Catalyzes the synthesis of GMP from XMP. The sequence is that of GMP synthase [glutamine-hydrolyzing] from Christiangramia forsetii (strain DSM 17595 / CGMCC 1.15422 / KT0803) (Gramella forsetii).